We begin with the raw amino-acid sequence, 93 residues long: Small ribosomal subunit protein uS19 (93 aa).

The protein belongs to the universal ribosomal protein uS19 family.

In terms of biological role, protein S19 forms a complex with S13 that binds strongly to the 16S ribosomal RNA. The sequence is that of Small ribosomal subunit protein uS19 from Mycobacterium sp. (strain JLS).